Reading from the N-terminus, the 474-residue chain is Protein nucleotidyltransferase YdiU (474 aa).

ATP-binding residues include Gly89, Gly91, Arg92, Lys112, Asp124, Gly125, Arg175, and Arg182. Asp256 serves as the catalytic Proton acceptor. Positions 257 and 266 each coordinate Mg(2+). Asp266 is an ATP binding site.

It belongs to the SELO family. It depends on Mg(2+) as a cofactor. Requires Mn(2+) as cofactor.

It carries out the reaction L-seryl-[protein] + ATP = 3-O-(5'-adenylyl)-L-seryl-[protein] + diphosphate. The enzyme catalyses L-threonyl-[protein] + ATP = 3-O-(5'-adenylyl)-L-threonyl-[protein] + diphosphate. It catalyses the reaction L-tyrosyl-[protein] + ATP = O-(5'-adenylyl)-L-tyrosyl-[protein] + diphosphate. The catalysed reaction is L-histidyl-[protein] + UTP = N(tele)-(5'-uridylyl)-L-histidyl-[protein] + diphosphate. It carries out the reaction L-seryl-[protein] + UTP = O-(5'-uridylyl)-L-seryl-[protein] + diphosphate. The enzyme catalyses L-tyrosyl-[protein] + UTP = O-(5'-uridylyl)-L-tyrosyl-[protein] + diphosphate. Its function is as follows. Nucleotidyltransferase involved in the post-translational modification of proteins. It can catalyze the addition of adenosine monophosphate (AMP) or uridine monophosphate (UMP) to a protein, resulting in modifications known as AMPylation and UMPylation. In Corynebacterium glutamicum (strain R), this protein is Protein nucleotidyltransferase YdiU.